The following is a 600-amino-acid chain: Elongation factor 4 (600 aa).

One can recognise a tr-type G domain in the interval 3-185 (KYIRNFSIIA…CLIHDIPHPQ (183 aa)). Residues 15-20 (DHGKST) and 132-135 (NKID) contribute to the GTP site.

Belongs to the TRAFAC class translation factor GTPase superfamily. Classic translation factor GTPase family. LepA subfamily.

The protein resides in the cell inner membrane. It carries out the reaction GTP + H2O = GDP + phosphate + H(+). Functionally, required for accurate and efficient protein synthesis under certain stress conditions. May act as a fidelity factor of the translation reaction, by catalyzing a one-codon backward translocation of tRNAs on improperly translocated ribosomes. Back-translocation proceeds from a post-translocation (POST) complex to a pre-translocation (PRE) complex, thus giving elongation factor G a second chance to translocate the tRNAs correctly. Binds to ribosomes in a GTP-dependent manner. The chain is Elongation factor 4 from Blochmanniella pennsylvanica (strain BPEN).